A 79-amino-acid chain; its full sequence is Dolichyl-diphosphooligosaccharide--protein glycosyltransferase subunit TMEM258 (79 aa).

2 consecutive transmembrane segments (helical) span residues 19-39 (PLLT…FTMI) and 55-75 (FIAA…LLWV).

Belongs to the OST5 family. As to quaternary structure, component of the oligosaccharyltransferase (OST) complex.

The protein localises to the membrane. The protein operates within protein modification; protein glycosylation. Its function is as follows. Subunit of the oligosaccharyl transferase (OST) complex that catalyzes the initial transfer of a defined glycan (Glc(3)Man(9)GlcNAc(2) in eukaryotes) from the lipid carrier dolichol-pyrophosphate to an asparagine residue within an Asn-X-Ser/Thr consensus motif in nascent polypeptide chains, the first step in protein N-glycosylation. N-glycosylation occurs cotranslationally and the complex associates with the Sec61 complex at the channel-forming translocon complex that mediates protein translocation across the endoplasmic reticulum (ER). All subunits are required for a maximal enzyme activity. This Caenorhabditis elegans protein is Dolichyl-diphosphooligosaccharide--protein glycosyltransferase subunit TMEM258.